Consider the following 444-residue polypeptide: 23S rRNA (uracil(1939)-C(5))-methyltransferase RlmD (444 aa).

The TRAM domain maps to 5-67; that stretch reads RNRLDRTPFQ…RHFDEAKTVG (63 aa). Positions 80, 86, 89, and 168 each coordinate [4Fe-4S] cluster. Residues Gln276, Phe305, Asn310, Glu326, Asp353, and Asp374 each contribute to the S-adenosyl-L-methionine site. The active-site Nucleophile is the Cys400.

It belongs to the class I-like SAM-binding methyltransferase superfamily. RNA M5U methyltransferase family. RlmD subfamily.

It carries out the reaction uridine(1939) in 23S rRNA + S-adenosyl-L-methionine = 5-methyluridine(1939) in 23S rRNA + S-adenosyl-L-homocysteine + H(+). Functionally, catalyzes the formation of 5-methyl-uridine at position 1939 (m5U1939) in 23S rRNA. The polypeptide is 23S rRNA (uracil(1939)-C(5))-methyltransferase RlmD (Xanthomonas axonopodis pv. citri (strain 306)).